Reading from the N-terminus, the 89-residue chain is Large ribosomal subunit protein uL24 (89 aa).

Belongs to the universal ribosomal protein uL24 family. As to quaternary structure, part of the 50S ribosomal subunit.

In terms of biological role, one of two assembly initiator proteins, it binds directly to the 5'-end of the 23S rRNA, where it nucleates assembly of the 50S subunit. Functionally, one of the proteins that surrounds the polypeptide exit tunnel on the outside of the subunit. In Chlorobium chlorochromatii (strain CaD3), this protein is Large ribosomal subunit protein uL24.